A 341-amino-acid polypeptide reads, in one-letter code: tRNA uridine(34) hydroxylase (341 aa).

Positions 139-233 constitute a Rhodanese domain; it reads SDPEVVLVDT…YLEEVPSTET (95 aa). Catalysis depends on C193, which acts as the Cysteine persulfide intermediate. 2 stretches are compositionally biased toward basic and acidic residues: residues 306 to 316 and 324 to 341; these read SLAEERGESHI and IEER…QANK. Positions 306–341 are disordered; that stretch reads SLAEERGESHIGGDIQNIIEERRQEKNDKKAKQANK.

Belongs to the TrhO family.

It carries out the reaction uridine(34) in tRNA + AH2 + O2 = 5-hydroxyuridine(34) in tRNA + A + H2O. Catalyzes oxygen-dependent 5-hydroxyuridine (ho5U) modification at position 34 in tRNAs. The chain is tRNA uridine(34) hydroxylase from Colwellia psychrerythraea (strain 34H / ATCC BAA-681) (Vibrio psychroerythus).